Here is a 784-residue protein sequence, read N- to C-terminus: Protein-tyrosine-phosphatase MKP1 (784 aa).

2 disordered regions span residues 1 to 73 (MVGR…NSKA) and 94 to 118 (PKAG…TGER). Residues 22–34 (WRSASWSASRTAS) show a composition bias toward low complexity. Thr64 and Thr109 each carry phosphothreonine. The Tyrosine-protein phosphatase domain occupies 149–291 (ECSKVADHIY…LLQCQKRVHA (143 aa)). Cys235 (phosphocysteine intermediate) is an active-site residue. 235-241 (CCQGVSR) serves as a coordination point for substrate. Positions 488–586 (HSSGSPSSTT…ASPSLAERRG (99 aa)) are disordered. 2 stretches are compositionally biased toward low complexity: residues 489 to 510 (SSGS…FLSP) and 521 to 553 (SLKS…LSLL). The segment covering 554–577 (PSQTSPKESRGVNTFLQPSPNRKA) has biased composition (polar residues). A phosphoserine mark is found at Ser558 and Ser572.

Interacts with MPK6. May interact with MPK3 and MPK4. Phosphorylated on threonine and serine residues by MPK6.

It localises to the cytoplasm. The protein resides in the cytosol. It carries out the reaction O-phospho-L-tyrosyl-[protein] + H2O = L-tyrosyl-[protein] + phosphate. Its function is as follows. Protein-tyrosine-phosphatase that acts as a negative regulator of MPK6 and MPK3 signaling by dephosphorylating and repressing MPK6 and MPK3. Modulates defense response by repressing salicylic acid (SA) production, camalexin biosynthesis and SNC1-mediated responses. Acts as a negative regulator of MPK6-mediated pathogen-associated molecular pattern (PAMP) responses, including MPK6 and MPK3 activation, accumulation of extracellular reactive oxygen species and inhibition of seedling growth. Involved in UV-B stress tolerance. May be involved in salt and genotoxic stress responses. This Arabidopsis thaliana (Mouse-ear cress) protein is Protein-tyrosine-phosphatase MKP1 (MKP1).